Consider the following 142-residue polypeptide: Virulence-associated membrane protein 1 (142 aa).

Residues 1-20 form the signal peptide; the sequence is MRGILVALTAALIFCSLTPA. Residues 59–79 form a helical membrane-spanning segment; the sequence is IAIAVGTALVTLVSAGVGGML.

As to quaternary structure, monomer.

It localises to the membrane. Its function is as follows. During infection, may play a role in establishing and maintaining biotrophy; the formation of a tight interaction zone between the host and the pathogen. This chain is Virulence-associated membrane protein 1, found in Mycosarcoma maydis (Corn smut fungus).